A 74-amino-acid chain; its full sequence is EMBRYO SURROUNDING FACTOR 1-like protein 4 (74 aa).

Residues 1-22 (MKSSHAYLVCILLLSLFSLHQC) form the signal peptide. Intrachain disulfides connect Cys36–Cys51, Cys41–Cys70, Cys49–Cys66, and Cys52–Cys59.

It belongs to the MEG family. As to expression, expressed in flowers.

The sequence is that of EMBRYO SURROUNDING FACTOR 1-like protein 4 (ESFL4) from Arabidopsis thaliana (Mouse-ear cress).